Here is a 305-residue protein sequence, read N- to C-terminus: MYNGILPVFKERGLTSHDVVFKLRKILKMKKIGHTGTLDPEVNGVLPICLGDATKVSDYIMEMGKTYHAMITLGKSTTTEDQTGDILETRAVDKNDINEDTIDQVLQQFEGHIQQIPPMYSSVKVNGRKLYEYARNNETVERPKRQVFIKDIHRISEVTFQEQTCHFEVEVTCGKGTYIRTLATDIGLKLGFPAHMSRLTRIASGGFQLESSLTIDQIKELHEHDSLHNELFPIEYGLKGLKSFQVKDSNFKKKICNGQKFHKKVLSQNVKEPFIFVDSSTQKVLAIYIVHPDKPYEIKPKKVFN.

The active-site Nucleophile is the Asp-39.

Belongs to the pseudouridine synthase TruB family. Type 1 subfamily.

It catalyses the reaction uridine(55) in tRNA = pseudouridine(55) in tRNA. Its function is as follows. Responsible for synthesis of pseudouridine from uracil-55 in the psi GC loop of transfer RNAs. This is tRNA pseudouridine synthase B from Staphylococcus epidermidis (strain ATCC 35984 / DSM 28319 / BCRC 17069 / CCUG 31568 / BM 3577 / RP62A).